A 423-amino-acid polypeptide reads, in one-letter code: UDP-N-acetylglucosamine 1-carboxyvinyltransferase 1 (423 aa).

Residue 23–24 (KN) participates in phosphoenolpyruvate binding. A UDP-N-acetyl-alpha-D-glucosamine-binding site is contributed by arginine 96. The active-site Proton donor is cysteine 120. Position 120 is a 2-(S-cysteinyl)pyruvic acid O-phosphothioketal (cysteine 120). Residues 125–129 (RPIDL), aspartate 309, and valine 331 contribute to the UDP-N-acetyl-alpha-D-glucosamine site.

Belongs to the EPSP synthase family. MurA subfamily.

The protein resides in the cytoplasm. The enzyme catalyses phosphoenolpyruvate + UDP-N-acetyl-alpha-D-glucosamine = UDP-N-acetyl-3-O-(1-carboxyvinyl)-alpha-D-glucosamine + phosphate. It participates in cell wall biogenesis; peptidoglycan biosynthesis. Cell wall formation. Adds enolpyruvyl to UDP-N-acetylglucosamine. The protein is UDP-N-acetylglucosamine 1-carboxyvinyltransferase 1 of Streptococcus thermophilus (strain CNRZ 1066).